Reading from the N-terminus, the 130-residue chain is Histone H2A type 4 (130 aa).

Serine 2 carries the post-translational modification Phosphoserine; by RPS6KA5. Arginine 4 is modified (citrulline; alternate). The residue at position 4 (arginine 4) is a Symmetric dimethylarginine; by PRMT5; alternate. An N6-(2-hydroxyisobutyryl)lysine; alternate mark is found at lysine 6 and lysine 10. An N6-acetyllysine; alternate mark is found at lysine 6 and lysine 10. Lysine 10 bears the N6-lactoyllysine; alternate mark. N6-(2-hydroxyisobutyryl)lysine is present on residues lysine 75, lysine 76, and lysine 96. Lysine 96 is subject to N6-glutaryllysine; alternate. Position 105 is an N5-methylglutamine (glutamine 105). Lysine 119 bears the N6-(2-hydroxyisobutyryl)lysine; alternate mark. An N6-glutaryllysine; alternate mark is found at lysine 119 and lysine 120. Residue lysine 119 is modified to N6-crotonyllysine; alternate. Residue lysine 120 is modified to N6-crotonyllysine. Threonine 121 carries the post-translational modification Phosphothreonine; by DCAF1. At lysine 126 the chain carries N6-glutaryllysine; alternate. Lysine 126 is subject to N6-crotonyllysine; alternate. Positions 127–128 match the [ST]-Q motif motif; that stretch reads SQ.

The protein belongs to the histone H2A family. In terms of assembly, the nucleosome is a histone octamer containing two molecules each of H2A, H2B, H3 and H4 assembled in one H3-H4 heterotetramer and two H2A-H2B heterodimers. The octamer wraps approximately 147 bp of DNA. In terms of processing, deiminated on Arg-4 in granulocytes upon calcium entry. Monoubiquitination of Lys-120 (H2AK119Ub) by RING1, TRIM37 and RNF2/RING2 complex gives a specific tag for epigenetic transcriptional repression and participates in X chromosome inactivation of female mammals. It is involved in the initiation of both imprinted and random X inactivation. Ubiquitinated H2A is enriched in inactive X chromosome chromatin. Ubiquitination of H2A functions downstream of methylation of 'Lys-27' of histone H3 (H3K27me). H2AK119Ub by RNF2/RING2 can also be induced by ultraviolet and may be involved in DNA repair. Following DNA double-strand breaks (DSBs), it is ubiquitinated through 'Lys-63' linkage of ubiquitin moieties by the E2 ligase UBE2N and the E3 ligases RNF8 and RNF168, leading to the recruitment of repair proteins to sites of DNA damage. Ubiquitination at Lys-14 and Lys-16 (H2AK13Ub and H2AK15Ub, respectively) in response to DNA damage is initiated by RNF168 that mediates monoubiquitination at these 2 sites, and 'Lys-63'-linked ubiquitin are then conjugated to monoubiquitin; RNF8 is able to extend 'Lys-63'-linked ubiquitin chains in vitro. H2AK119Ub and ionizing radiation-induced 'Lys-63'-linked ubiquitination (H2AK13Ub and H2AK15Ub) are distinct events. Post-translationally, phosphorylation on Ser-2 (H2AS1ph) is enhanced during mitosis. Phosphorylation on Ser-2 by RPS6KA5/MSK1 directly represses transcription. Acetylation of H3 inhibits Ser-2 phosphorylation by RPS6KA5/MSK1. Phosphorylation at Thr-121 (H2AT120ph) by DCAF1 is present in the regulatory region of many tumor suppresor genes and down-regulates their transcription. In terms of processing, symmetric dimethylation on Arg-4 by the PRDM1/PRMT5 complex may play a crucial role in the germ-cell lineage. Glutamine methylation at Gln-105 (H2AQ104me) by FBL is specifically dedicated to polymerase I. It is present at 35S ribosomal DNA locus and impairs binding of the FACT complex. Post-translationally, crotonylation (Kcr) is specifically present in male germ cells and marks testis-specific genes in post-meiotic cells, including X-linked genes that escape sex chromosome inactivation in haploid cells. Crotonylation marks active promoters and enhancers and confers resistance to transcriptional repressors. It is also associated with post-meiotically activated genes on autosomes. In terms of processing, lactylated in macrophages by EP300/P300 by using lactoyl-CoA directly derived from endogenous or exogenous lactate, leading to stimulates gene transcription. Testis.

The protein resides in the nucleus. It is found in the chromosome. In terms of biological role, core component of nucleosome. Nucleosomes wrap and compact DNA into chromatin, limiting DNA accessibility to the cellular machineries which require DNA as a template. Histones thereby play a central role in transcription regulation, DNA repair, DNA replication and chromosomal stability. DNA accessibility is regulated via a complex set of post-translational modifications of histones, also called histone code, and nucleosome remodeling. In Rattus norvegicus (Rat), this protein is Histone H2A type 4.